Consider the following 324-residue polypeptide: Glyoxylate/hydroxypyruvate reductase B (324 aa).

Active-site residues include R237 and E266. H285 functions as the Proton donor in the catalytic mechanism.

This sequence belongs to the D-isomer specific 2-hydroxyacid dehydrogenase family. GhrB subfamily. Homodimer.

The protein localises to the cytoplasm. The catalysed reaction is glycolate + NADP(+) = glyoxylate + NADPH + H(+). It carries out the reaction (R)-glycerate + NAD(+) = 3-hydroxypyruvate + NADH + H(+). The enzyme catalyses (R)-glycerate + NADP(+) = 3-hydroxypyruvate + NADPH + H(+). In terms of biological role, catalyzes the NADPH-dependent reduction of glyoxylate and hydroxypyruvate into glycolate and glycerate, respectively. This chain is Glyoxylate/hydroxypyruvate reductase B, found in Escherichia fergusonii (strain ATCC 35469 / DSM 13698 / CCUG 18766 / IAM 14443 / JCM 21226 / LMG 7866 / NBRC 102419 / NCTC 12128 / CDC 0568-73).